Consider the following 118-residue polypeptide: MARVKRGVVARARHKKILKQAKGYYGARSRVYRVAVQAVTKAGQYAYRDRRQRKRQFRQLWITRINAAAREHGLSYSCLINGLKKAFIDIDRKMLADIAVFDKPSFAALAKKAKEALL.

This sequence belongs to the bacterial ribosomal protein bL20 family.

Functionally, binds directly to 23S ribosomal RNA and is necessary for the in vitro assembly process of the 50S ribosomal subunit. It is not involved in the protein synthesizing functions of that subunit. The protein is Large ribosomal subunit protein bL20 of Hamiltonella defensa subsp. Acyrthosiphon pisum (strain 5AT).